A 114-amino-acid chain; its full sequence is Iron-sulfur cluster insertion protein ErpA (114 aa).

The iron-sulfur cluster site is built by Cys42, Cys106, and Cys108.

It belongs to the HesB/IscA family. As to quaternary structure, homodimer. The cofactor is iron-sulfur cluster.

Functionally, required for insertion of 4Fe-4S clusters for at least IspG. The polypeptide is Iron-sulfur cluster insertion protein ErpA (Haemophilus ducreyi (strain 35000HP / ATCC 700724)).